We begin with the raw amino-acid sequence, 389 residues long: Aspartate aminotransferase (389 aa).

Positions 34 and 171 each coordinate L-aspartate. Lys-233 carries the post-translational modification N6-(pyridoxal phosphate)lysine. Residue Arg-362 coordinates L-aspartate.

The protein belongs to the class-I pyridoxal-phosphate-dependent aminotransferase family. In terms of assembly, homodimer. Requires pyridoxal 5'-phosphate as cofactor.

The protein localises to the cytoplasm. It catalyses the reaction L-aspartate + 2-oxoglutarate = oxaloacetate + L-glutamate. In Pyrococcus abyssi (strain GE5 / Orsay), this protein is Aspartate aminotransferase (aspC).